The primary structure comprises 172 residues: Peptide methionine sulfoxide reductase MsrA 2 (172 aa).

The active site involves cysteine 12.

Belongs to the MsrA Met sulfoxide reductase family.

The enzyme catalyses L-methionyl-[protein] + [thioredoxin]-disulfide + H2O = L-methionyl-(S)-S-oxide-[protein] + [thioredoxin]-dithiol. The catalysed reaction is [thioredoxin]-disulfide + L-methionine + H2O = L-methionine (S)-S-oxide + [thioredoxin]-dithiol. Has an important function as a repair enzyme for proteins that have been inactivated by oxidation. Catalyzes the reversible oxidation-reduction of methionine sulfoxide in proteins to methionine. The protein is Peptide methionine sulfoxide reductase MsrA 2 (msrA2) of Lactococcus lactis subsp. lactis (strain IL1403) (Streptococcus lactis).